The following is a 58-amino-acid chain: UPF0391 membrane protein Gbem_0127 (58 aa).

The next 2 helical transmembrane spans lie at 4–24 (WALI…GGIA) and 33–53 (ILFY…LLAG).

The protein belongs to the UPF0391 family.

Its subcellular location is the cell membrane. This is UPF0391 membrane protein Gbem_0127 from Citrifermentans bemidjiense (strain ATCC BAA-1014 / DSM 16622 / JCM 12645 / Bem) (Geobacter bemidjiensis).